Here is a 375-residue protein sequence, read N- to C-terminus: N-acetyldiaminopimelate deacetylase (375 aa).

The active site involves D69. E128 (proton acceptor) is an active-site residue.

The protein belongs to the peptidase M20A family. N-acetyldiaminopimelate deacetylase subfamily.

It carries out the reaction N-acetyl-(2S,6S)-2,6-diaminopimelate + H2O = (2S,6S)-2,6-diaminopimelate + acetate. It functions in the pathway amino-acid biosynthesis; L-lysine biosynthesis via DAP pathway; LL-2,6-diaminopimelate from (S)-tetrahydrodipicolinate (acetylase route): step 3/3. Its function is as follows. Catalyzes the conversion of N-acetyl-diaminopimelate to diaminopimelate and acetate. The chain is N-acetyldiaminopimelate deacetylase from Streptococcus suis (strain 05ZYH33).